The primary structure comprises 335 residues: Hsp90 co-chaperone Cdc37-like 1 (335 aa).

Positions 1-11 (MEQPWPPPGPW) are enriched in pro residues. Residues 1–42 (MEQPWPPPGPWSFPRTGGETEEESDLDVSPSSSHYSPVPDGG) form a disordered region. Residues 2–170 (EQPWPPPGPW…YEQKIRHFGM (169 aa)) form a self-association region. Positions 27–40 (DVSPSSSHYSPVPD) are enriched in low complexity. Phosphoserine occurs at positions 32 and 88. Residues 84 to 120 (HNSESLDQEHAKAQTAVSELRQREEEWRQKEEALVQR) are a coiled coil. The self-association and interaction with Hsp90 stretch occupies residues 147-276 (KTEDEDKSQS…ARVRLYAQSQ (130 aa)). Positions 266–335 (KARVRLYAQS…EDDDRMMDTV (70 aa)) are interaction with Hsp70. Residues 277-335 (SFAPVTVENHAPHSGVGCIGSAEPLPQNPDSLQCCPPAPLCSVDSVVHKEDDDRMMDTV) are required for interaction with STIP1.

Belongs to the CDC37 family. In terms of assembly, self-associates. Forms complexes with Hsp70 and Hsp90. Interacts with CDC37, FKBP4, PPID and STIP1.

Its subcellular location is the cytoplasm. Its function is as follows. Co-chaperone that binds to numerous proteins and promotes their interaction with Hsp70 and Hsp90. The sequence is that of Hsp90 co-chaperone Cdc37-like 1 (Cdc37l1) from Rattus norvegicus (Rat).